A 784-amino-acid polypeptide reads, in one-letter code: LPS-assembly protein LptD (784 aa).

Residues 1–24 (MKKRIPTLLATMIATALYSQQGLA) form the signal peptide. 2 cysteine pairs are disulfide-bonded: C31–C724 and C173–C725.

It belongs to the LptD family. As to quaternary structure, component of the lipopolysaccharide transport and assembly complex. Interacts with LptE and LptA. In terms of processing, contains two intramolecular disulfide bonds.

The protein localises to the cell outer membrane. Its function is as follows. Together with LptE, is involved in the assembly of lipopolysaccharide (LPS) at the surface of the outer membrane. This is LPS-assembly protein LptD from Escherichia coli O1:K1 / APEC.